Reading from the N-terminus, the 348-residue chain is Anthranilate phosphoribosyltransferase (348 aa).

5-phospho-alpha-D-ribose 1-diphosphate-binding positions include glycine 80, 83–84 (GD), threonine 88, 90–93 (NVST), 108–116 (KHGNRSVSS), and serine 120. Glycine 80 provides a ligand contact to anthranilate. Mg(2+) is bound at residue serine 92. Position 111 (asparagine 111) interacts with anthranilate. Position 166 (arginine 166) interacts with anthranilate. Positions 224 and 225 each coordinate Mg(2+).

It belongs to the anthranilate phosphoribosyltransferase family. As to quaternary structure, homodimer. The cofactor is Mg(2+).

The enzyme catalyses N-(5-phospho-beta-D-ribosyl)anthranilate + diphosphate = 5-phospho-alpha-D-ribose 1-diphosphate + anthranilate. The protein operates within amino-acid biosynthesis; L-tryptophan biosynthesis; L-tryptophan from chorismate: step 2/5. Catalyzes the transfer of the phosphoribosyl group of 5-phosphorylribose-1-pyrophosphate (PRPP) to anthranilate to yield N-(5'-phosphoribosyl)-anthranilate (PRA). This chain is Anthranilate phosphoribosyltransferase, found in Sorangium cellulosum (strain So ce56) (Polyangium cellulosum (strain So ce56)).